The sequence spans 234 residues: MFINSLVPAKLGDVYRGYLLKKKTNESISLGVGTVFIERVFDLVAMISLLFISAYLSFKSDIPKEILYSIKWGVIIILFLIILIFGFLIVNSKINLKNKKLEAILMNFEKGLKAVKLNTLPLLITLSFTGWFIEGLTVYFIFLSLNLNLEILFGVFSDLASSLLTAIPLTPSGLGVVEYALIYILKLKNIDYSGAFAVLILYRLISYFSIVLFGAIMFYIVERNILKEPKNEKY.

A run of 5 helical transmembrane segments spans residues 32 to 52, 70 to 90, 123 to 143, 164 to 184, and 198 to 218; these read VGTV…LLFI, IKWG…FLIV, LITL…FIFL, LTAI…LIYI, and VLIL…AIMF.

This sequence belongs to the UPF0104 family.

The protein resides in the cell membrane. The polypeptide is UPF0104 membrane protein MJ1078 (Methanocaldococcus jannaschii (strain ATCC 43067 / DSM 2661 / JAL-1 / JCM 10045 / NBRC 100440) (Methanococcus jannaschii)).